Consider the following 235-residue polypeptide: Segregation and condensation protein A (235 aa).

The protein belongs to the ScpA family. In terms of assembly, component of a cohesin-like complex composed of ScpA, ScpB and the Smc homodimer, in which ScpA and ScpB bind to the head domain of Smc. The presence of the three proteins is required for the association of the complex with DNA.

Its subcellular location is the cytoplasm. Its function is as follows. Participates in chromosomal partition during cell division. May act via the formation of a condensin-like complex containing Smc and ScpB that pull DNA away from mid-cell into both cell halves. The sequence is that of Segregation and condensation protein A from Streptococcus agalactiae serotype Ia (strain ATCC 27591 / A909 / CDC SS700).